A 247-amino-acid polypeptide reads, in one-letter code: Granulin (247 aa).

This sequence belongs to the polyhedrin family.

Its function is as follows. Component of the virus occlusion bodies, which are large proteinaceous structures, that protect the virus from the outside environment for extended periods until they are ingested by insect larvae. This chain is Granulin, found in Agrotis segetum granulosis virus (AsGV).